Reading from the N-terminus, the 225-residue chain is 7-cyano-7-deazaguanine synthase (225 aa).

An ATP-binding site is contributed by 10–20; the sequence is VSGGLDSTTVI. Zn(2+) is bound by residues Cys189, Cys199, Cys202, and Cys205.

It belongs to the QueC family. Zn(2+) is required as a cofactor.

It carries out the reaction 7-carboxy-7-deazaguanine + NH4(+) + ATP = 7-cyano-7-deazaguanine + ADP + phosphate + H2O + H(+). Its pathway is purine metabolism; 7-cyano-7-deazaguanine biosynthesis. In terms of biological role, catalyzes the ATP-dependent conversion of 7-carboxy-7-deazaguanine (CDG) to 7-cyano-7-deazaguanine (preQ(0)). In Cellvibrio japonicus (strain Ueda107) (Pseudomonas fluorescens subsp. cellulosa), this protein is 7-cyano-7-deazaguanine synthase.